A 45-amino-acid polypeptide reads, in one-letter code: Iota-conotoxin-like R11.13 (45 aa).

4 disulfides stabilise this stretch: Cys-5/Cys-19, Cys-12/Cys-22, Cys-18/Cys-27, and Cys-21/Cys-36. Leu-43 is subject to D-leucine. Residue Arg-45 is a propeptide, removed by a carboxypeptidase.

The protein belongs to the conotoxin I1 superfamily. Expressed by the venom duct.

Its subcellular location is the secreted. Its function is as follows. Iota-conotoxins bind to voltage-gated sodium channels (Nav) and act as agonists by shifting the voltage-dependence of activation to more hyperpolarized levels. Produces general excitatory symptoms. This is Iota-conotoxin-like R11.13 from Conus radiatus (Rayed cone).